Consider the following 212-residue polypeptide: Peptide methionine sulfoxide reductase MsrA (212 aa).

Residue Cys52 is part of the active site.

Belongs to the MsrA Met sulfoxide reductase family.

It catalyses the reaction L-methionyl-[protein] + [thioredoxin]-disulfide + H2O = L-methionyl-(S)-S-oxide-[protein] + [thioredoxin]-dithiol. The catalysed reaction is [thioredoxin]-disulfide + L-methionine + H2O = L-methionine (S)-S-oxide + [thioredoxin]-dithiol. Functionally, has an important function as a repair enzyme for proteins that have been inactivated by oxidation. Catalyzes the reversible oxidation-reduction of methionine sulfoxide in proteins to methionine. In Salmonella choleraesuis (strain SC-B67), this protein is Peptide methionine sulfoxide reductase MsrA.